Consider the following 624-residue polypeptide: MALVSVAPLVSMRRSLFSSPYELKSIDKTIPNLVMCRKRMLGRPSIRVSSTASVSNDDGVRRRVGDYRYNHWDEDLIDSLATSYEAPSYLKRADTLVEAIKDRFNSMGVDDGERMSPLTDLYQRLWMVDSVERLGIDRHFQNEIKSALDYVFRYFASSYWKEKGIGRGRQSAVTDLNSTALGLRTLRLHGYPVSSDVLENFKDHNGQFTCSGIQTEGEIRGVLNLFRASLIAFPGEKVMEEAEIFSTMYLKHALQKIAVSSLSQEIEYLLEYGWHTNPPRLEARMYMEVFPQDTIYEQKLVELAKVEFNIFHSLQKRELQSLTRWWKHYGFPQLSFTRHIHVEYYTFGSCIATDPKQSAFRLCFAKMSYFVTVLDDIYDTYGTMEELELFTAAIKRWDPSVVDCLPEYMKGVYMAVYDTVNEMAKEAEKVQGRDTLNYVRQAWELYIDAYMPEAKWISSGYLPTFQEYLDNSKISFGTRITILQPILTLGEPLPHEILQEIDFPAKFNDLISVILRLKGDTRCYKADRARGEEASSVSCYMKDNAGLTEEDAIHRINAMVHNLLKELNWELLKPDCNVPISCKKAAFDICRIFHHGYKYRDGYGDATIETKNLVKRTVLEPVPL.

A chloroplast-targeting transit peptide spans 1-47 (MALVSVAPLVSMRRSLFSSPYELKSIDKTIPNLVMCRKRMLGRPSIR). Mg(2+) is bound by residues Asp375, Asp379, and Asp527. The DDXXD motif signature appears at 375-379 (DDIYD).

The protein belongs to the terpene synthase family. Tpsd subfamily. It depends on Mg(2+) as a cofactor. The cofactor is Mn(2+).

The protein localises to the plastid. The protein resides in the chloroplast. The enzyme catalyses (2E)-geranyl diphosphate = (-)-beta-phellandrene + diphosphate. It participates in terpene metabolism; oleoresin biosynthesis. It functions in the pathway secondary metabolite biosynthesis; terpenoid biosynthesis. Its function is as follows. Monoterpene synthase (TPS) involved in the biosynthesis of monoterpene natural products included in conifer oleoresin secretions and volatile emissions; these compounds contribute to biotic and abiotic stress defense against herbivores and pathogens. Catalyzes the conversion of (2E)-geranyl diphosphate (GPP) to (-)-beta-phellandrene. In Pinus contorta (Shore pine), this protein is (-)-beta-phellandrene synthase 2, chloroplastic.